The primary structure comprises 134 residues: ATP synthase epsilon chain (134 aa).

This sequence belongs to the ATPase epsilon chain family. F-type ATPases have 2 components, CF(1) - the catalytic core - and CF(0) - the membrane proton channel. CF(1) has five subunits: alpha(3), beta(3), gamma(1), delta(1), epsilon(1). CF(0) has three main subunits: a, b and c.

The protein resides in the cell membrane. Functionally, produces ATP from ADP in the presence of a proton gradient across the membrane. The polypeptide is ATP synthase epsilon chain (Ruminococcus albus (strain ATCC 27210 / DSM 20455 / JCM 14654 / NCDO 2250 / 7)).